A 214-amino-acid chain; its full sequence is Urease accessory protein UreF (214 aa).

Belongs to the UreF family. In terms of assembly, ureD, UreF and UreG form a complex that acts as a GTP-hydrolysis-dependent molecular chaperone, activating the urease apoprotein by helping to assemble the nickel containing metallocenter of UreC. The UreE protein probably delivers the nickel.

The protein resides in the cytoplasm. Functionally, required for maturation of urease via the functional incorporation of the urease nickel metallocenter. This chain is Urease accessory protein UreF, found in Ruegeria sp. (strain TM1040) (Silicibacter sp.).